We begin with the raw amino-acid sequence, 239 residues long: MANKKSPAATWPVANGEYVLGNPESCVGVITLGSHGLDQAAVDAGAALSGPCHTENLGIEKVVANYISNPNIRFMIIAGSEVQGHITGQCIKALYENGIGDDGGIIGAKGAIPFMENIGKEPVERLQRQIIDCIDLIDVEDTAKIAAAIKNCTSQDPDAIDEEPMVVDLEGGEAVANTESTSMKPTSPEMALLEARMKIVSEKMNEAAMIAKFNSGYYNGKIQGIAIGLFLSILVFSLL.

The Cytoplasmic portion of the chain corresponds to 1–215 (MANKKSPAAT…EAAMIAKFNS (215 aa)). Histidine 85 is a 5-hydroxybenzimidazolylcob(I)amide binding site. Residues 216–238 (GYYNGKIQGIAIGLFLSILVFSL) traverse the membrane as a helical segment. Leucine 239 is a topological domain (extracellular).

It belongs to the MtrA family. In terms of assembly, the complex is composed of 8 subunits; MtrA, MtrB, MtrC, MtrD, MtrE, MtrF, MtrG and MtrH. 5-hydroxybenzimidazolylcob(I)amide serves as cofactor.

Its subcellular location is the cell membrane. The catalysed reaction is 5-methyl-5,6,7,8-tetrahydromethanopterin + coenzyme M + 2 Na(+)(in) = 5,6,7,8-tetrahydromethanopterin + methyl-coenzyme M + 2 Na(+)(out). The protein operates within one-carbon metabolism; methanogenesis from CO(2); methyl-coenzyme M from 5,10-methylene-5,6,7,8-tetrahydromethanopterin: step 2/2. Part of a complex that catalyzes the formation of methyl-coenzyme M and tetrahydromethanopterin from coenzyme M and methyl-tetrahydromethanopterin. This is an energy-conserving, sodium-ion translocating step. The chain is Tetrahydromethanopterin S-methyltransferase subunit A from Methanococcus maripaludis (strain C7 / ATCC BAA-1331).